A 468-amino-acid chain; its full sequence is Hexokinase (468 aa).

Positions 10–466 constitute a Hexokinase domain; that stretch reads AKQLAELEVV…SGKGAALIAD (457 aa). The interval 74 to 225 is hexokinase small subdomain; the sequence is TGAEVGEAYA…NVPAVCKAIV (152 aa). 85–90 is a binding site for ATP; the sequence is DFGGST. The tract at residues 163–189 is glucose-binding; it reads PVGFTFSFPCAQAALNSSFLIEWTKGF. Residues 226–455 are hexokinase large subdomain; the sequence is NDTVGTLVSC…KNIHYCIADD (230 aa).

This sequence belongs to the hexokinase family.

The enzyme catalyses a D-hexose + ATP = a D-hexose 6-phosphate + ADP + H(+). It catalyses the reaction D-mannose + ATP = D-mannose 6-phosphate + ADP + H(+). The catalysed reaction is D-fructose + ATP = D-fructose 6-phosphate + ADP + H(+). It carries out the reaction D-glucose + ATP = D-glucose 6-phosphate + ADP + H(+). It participates in carbohydrate metabolism; hexose metabolism. The protein operates within carbohydrate degradation; glycolysis; D-glyceraldehyde 3-phosphate and glycerone phosphate from D-glucose: step 1/4. Functionally, catalyzes the phosphorylation of various hexoses to hexose 6-phosphate. The sequence is that of Hexokinase (HXK) from Toxoplasma gondii.